The following is a 161-amino-acid chain: uncharacterized protein (161 aa).

This is an uncharacterized protein from Mycoplasma (Bacteriophage L2).